We begin with the raw amino-acid sequence, 498 residues long: Lysine--tRNA ligase (498 aa).

Positions 401 and 408 each coordinate Mg(2+).

Belongs to the class-II aminoacyl-tRNA synthetase family. In terms of assembly, homodimer. Mg(2+) is required as a cofactor.

It localises to the cytoplasm. It carries out the reaction tRNA(Lys) + L-lysine + ATP = L-lysyl-tRNA(Lys) + AMP + diphosphate. In Dehalococcoides mccartyi (strain ATCC BAA-2100 / JCM 16839 / KCTC 5957 / BAV1), this protein is Lysine--tRNA ligase.